We begin with the raw amino-acid sequence, 63 residues long: Conotoxin TeAr193 (63 aa).

The signal sequence occupies residues 1 to 22 (MRCLPVFVILLLLIASAPSVDA). The propeptide occupies 23-48 (QPKTKDDIPQASFLDNAKRYLQVLES).

The protein belongs to the conotoxin T superfamily. Contains 2 disulfide bonds that can be either 'C1-C3, C2-C4' or 'C1-C4, C2-C3', since these disulfide connectivities have been observed for conotoxins with cysteine framework V (for examples, see AC P0DQQ7 and AC P81755). As to expression, expressed by the venom duct.

It localises to the secreted. The protein is Conotoxin TeAr193 of Conus textile (Cloth-of-gold cone).